Here is a 274-residue protein sequence, read N- to C-terminus: Orotidine 5'-phosphate decarboxylase (274 aa).

Lys96 (proton donor) is an active-site residue.

Belongs to the OMP decarboxylase family. Type 2 subfamily.

The enzyme catalyses orotidine 5'-phosphate + H(+) = UMP + CO2. It functions in the pathway pyrimidine metabolism; UMP biosynthesis via de novo pathway; UMP from orotate: step 2/2. The sequence is that of Orotidine 5'-phosphate decarboxylase from Bacteroides fragilis (strain ATCC 25285 / DSM 2151 / CCUG 4856 / JCM 11019 / LMG 10263 / NCTC 9343 / Onslow / VPI 2553 / EN-2).